The following is a 1025-amino-acid chain: Leucyl-cystinyl aminopeptidase (1025 aa).

Methionine 1 is modified (N-acetylmethionine). Residues 1–109 (MESFTNDRLQ…DGTCSLPSAR (109 aa)) are Cytoplasmic-facing. The Dileucine internalization motif motif lies at 53–54 (LL). Position 70 is a phosphotyrosine (tyrosine 70). The Dileucine internalization motif signature appears at 76–77 (LL). A phosphoserine mark is found at serine 80 and serine 91. The interval 96 to 101 (RQSPDG) is tankyrase binding. The helical; Signal-anchor for type II membrane protein transmembrane segment at 110-131 (TLVICVFVIVVAVSVIMVIYLL) threads the bilayer. At 132 to 1025 (PRCTFTKEGC…RNLKTLSQWL (894 aa)) the chain is on the extracellular side. N-linked (GlcNAc...) asparagine glycans are attached at residues asparagine 145, asparagine 184, asparagine 215, asparagine 256, and asparagine 266. Residue glutamate 295 participates in substrate binding. Residues asparagine 368 and asparagine 374 are each glycosylated (N-linked (GlcNAc...) asparagine). A substrate-binding site is contributed by 428–432 (GAMEN). Asparagine 447 is a glycosylation site (N-linked (GlcNAc...) asparagine). A Zn(2+)-binding site is contributed by histidine 464. The Proton acceptor role is filled by glutamate 465. The Zn(2+) site is built by histidine 468 and glutamate 487. N-linked (GlcNAc...) asparagine glycosylation is found at asparagine 525, asparagine 578, asparagine 664, asparagine 682, asparagine 695, asparagine 758, asparagine 834, asparagine 850, and asparagine 989.

The protein belongs to the peptidase M1 family. Homodimer. Binds tankyrases 1 and 2. Requires Zn(2+) as cofactor.

It is found in the cell membrane. It localises to the endomembrane system. It catalyses the reaction Release of an N-terminal amino acid, Cys-|-Xaa-, in which the half-cystine residue is involved in a disulfide loop, notably in oxytocin or vasopressin. Hydrolysis rates on a range of aminoacyl arylamides exceed that for the cystinyl derivative, however.. Release of an N-terminal amino acid, cleave before cysteine, leucine as well as other amino acids. Degrades peptide hormones such as oxytocin, vasopressin and angiotensin III, and plays a role in maintaining homeostasis during pregnancy. May be involved in the inactivation of neuronal peptides in the brain. Cleaves Met-enkephalin and dynorphin. Binds angiotensin IV and may be the angiotensin IV receptor in the brain. The sequence is that of Leucyl-cystinyl aminopeptidase (Lnpep) from Mus musculus (Mouse).